The following is a 488-amino-acid chain: Probable malate:quinone oxidoreductase (488 aa).

It belongs to the MQO family. FAD serves as cofactor.

It carries out the reaction (S)-malate + a quinone = a quinol + oxaloacetate. The protein operates within carbohydrate metabolism; tricarboxylic acid cycle; oxaloacetate from (S)-malate (quinone route): step 1/1. The sequence is that of Probable malate:quinone oxidoreductase from Neisseria meningitidis serogroup C (strain 053442).